Reading from the N-terminus, the 291-residue chain is Putative ribosomal protein uL16-like, mitochondrial (291 aa).

The transit peptide at 1 to 27 (MQRFMFSRVVEHQRQISRGFLSLVPSL) directs the protein to the mitochondrion. Basic and acidic residues predominate over residues 127-137 (VHETSNNEKKQ). The tract at residues 127–173 (VHETSNNEKKQQKQKSSVNEKKPKKKKKSSISDIPRRTKFQKHHRGR) is disordered. Residues 163–173 (RTKFQKHHRGR) are compositionally biased toward basic residues.

Belongs to the universal ribosomal protein uL16 family.

The protein resides in the mitochondrion. Functionally, could be a component of the large subunit of mitochondrial ribosome. This chain is Putative ribosomal protein uL16-like, mitochondrial, found in Arabidopsis thaliana (Mouse-ear cress).